The sequence spans 383 residues: Succinyl-diaminopimelate desuccinylase (383 aa).

Residue His74 participates in Zn(2+) binding. Asp76 is an active-site residue. Zn(2+) is bound at residue Asp107. Catalysis depends on Glu141, which acts as the Proton acceptor. Residues Glu142, Glu170, and His356 each coordinate Zn(2+).

It belongs to the peptidase M20A family. DapE subfamily. Homodimer. It depends on Zn(2+) as a cofactor. Co(2+) is required as a cofactor.

The catalysed reaction is N-succinyl-(2S,6S)-2,6-diaminopimelate + H2O = (2S,6S)-2,6-diaminopimelate + succinate. Its pathway is amino-acid biosynthesis; L-lysine biosynthesis via DAP pathway; LL-2,6-diaminopimelate from (S)-tetrahydrodipicolinate (succinylase route): step 3/3. In terms of biological role, catalyzes the hydrolysis of N-succinyl-L,L-diaminopimelic acid (SDAP), forming succinate and LL-2,6-diaminopimelate (DAP), an intermediate involved in the bacterial biosynthesis of lysine and meso-diaminopimelic acid, an essential component of bacterial cell walls. The sequence is that of Succinyl-diaminopimelate desuccinylase from Cupriavidus pinatubonensis (strain JMP 134 / LMG 1197) (Cupriavidus necator (strain JMP 134)).